Consider the following 332-residue polypeptide: Fructose-1,6-bisphosphatase class 1 (332 aa).

Mg(2+)-binding residues include glutamate 89, aspartate 110, leucine 112, and aspartate 113. Substrate-binding positions include 113–116, asparagine 206, tyrosine 239, 257–259, and lysine 269; these read DGSS and YLY. Mg(2+) is bound at residue glutamate 275.

Belongs to the FBPase class 1 family. In terms of assembly, homotetramer. Mg(2+) is required as a cofactor.

The protein localises to the cytoplasm. It catalyses the reaction beta-D-fructose 1,6-bisphosphate + H2O = beta-D-fructose 6-phosphate + phosphate. Its pathway is carbohydrate biosynthesis; gluconeogenesis. The protein is Fructose-1,6-bisphosphatase class 1 of Salmonella typhimurium (strain LT2 / SGSC1412 / ATCC 700720).